Reading from the N-terminus, the 172-residue chain is Protein-export protein SecB (172 aa).

It belongs to the SecB family. As to quaternary structure, homotetramer, a dimer of dimers. One homotetramer interacts with 1 SecA dimer.

The protein resides in the cytoplasm. Its function is as follows. One of the proteins required for the normal export of preproteins out of the cell cytoplasm. It is a molecular chaperone that binds to a subset of precursor proteins, maintaining them in a translocation-competent state. It also specifically binds to its receptor SecA. The sequence is that of Protein-export protein SecB from Stenotrophomonas maltophilia (strain K279a).